We begin with the raw amino-acid sequence, 37 residues long: Large ribosomal subunit protein bL36c (37 aa).

It belongs to the bacterial ribosomal protein bL36 family.

It localises to the plastid. It is found in the chloroplast. The protein is Large ribosomal subunit protein bL36c of Mesembryanthemum crystallinum (Common ice plant).